Reading from the N-terminus, the 216-residue chain is MSLGLVGRKVGMTRIFTDDGEAIPVTVVEVGDNRVTQIKTDETDGYTAVQVTFGARRASRVTKPLAGHLAKAGVEAGEIIREFRIDAAKAAELQAGGSLSVDLFEVGQKIDVQGVTIGKGYAGTIKRYHFASGRATHGNSRSHNVPGSIGMAQDPGRVFPGKRMTGHLGDVTRTVQNLEIAKIDAERKLLLVKGAIPGSKNGKVIVTPAVKAKAKA.

The disordered stretch occupies residues 134 to 153 (RATHGNSRSHNVPGSIGMAQ). The residue at position 153 (Gln153) is an N5-methylglutamine.

It belongs to the universal ribosomal protein uL3 family. Part of the 50S ribosomal subunit. Forms a cluster with proteins L14 and L19. Post-translationally, methylated by PrmB.

Functionally, one of the primary rRNA binding proteins, it binds directly near the 3'-end of the 23S rRNA, where it nucleates assembly of the 50S subunit. This is Large ribosomal subunit protein uL3 from Cupriavidus taiwanensis (strain DSM 17343 / BCRC 17206 / CCUG 44338 / CIP 107171 / LMG 19424 / R1) (Ralstonia taiwanensis (strain LMG 19424)).